The following is a 556-amino-acid chain: 2-succinyl-5-enolpyruvyl-6-hydroxy-3-cyclohexene-1-carboxylate synthase (556 aa).

It belongs to the TPP enzyme family. MenD subfamily. As to quaternary structure, homodimer. It depends on Mg(2+) as a cofactor. Requires Mn(2+) as cofactor. Thiamine diphosphate serves as cofactor.

The catalysed reaction is isochorismate + 2-oxoglutarate + H(+) = 5-enolpyruvoyl-6-hydroxy-2-succinyl-cyclohex-3-ene-1-carboxylate + CO2. The protein operates within quinol/quinone metabolism; 1,4-dihydroxy-2-naphthoate biosynthesis; 1,4-dihydroxy-2-naphthoate from chorismate: step 2/7. It participates in quinol/quinone metabolism; menaquinone biosynthesis. Functionally, catalyzes the thiamine diphosphate-dependent decarboxylation of 2-oxoglutarate and the subsequent addition of the resulting succinic semialdehyde-thiamine pyrophosphate anion to isochorismate to yield 2-succinyl-5-enolpyruvyl-6-hydroxy-3-cyclohexene-1-carboxylate (SEPHCHC). The polypeptide is 2-succinyl-5-enolpyruvyl-6-hydroxy-3-cyclohexene-1-carboxylate synthase (Salmonella gallinarum (strain 287/91 / NCTC 13346)).